The following is a 457-amino-acid chain: MEIPPGLETTKRKVAHSDEHGFSDQVRVPNVIVMVGLPARGKTYISKKLCRYLKWTGFTTKVFNVGEYRRSDANAADAIHGANASFFSPNNADALKVRAESARRAMEDMADYLNSGTGGVAIFDATNTTKDRRRIIIDFCKKQRLRCFFIESVCDDPAIIDCNVTDVKVNSPDYKGLMTAEQAKEDFMNRIENYKKQYEPLDESEDESLSFIKVINAGRSFKVHQVRGHVQSRVVYFLMNIHLLPRSIYLTRHGQSEYNAMGRLGGDSPLTEDGQKYASALADFFEEEEVPGLRVWCSQKVRAAQTAQHLKPDFHTEYWKALDELDAGICEGLTYEDILQRYPKQADDRATDKYHYRYPSGESYEDVVSRLEPVIMELERQANVLVVSHQAVLRCVLAYFYDRPLSELPYIDIPLHSLVKLTPRAYHCDSTIYALDLESGEWTETSDQLPLCDSPRD.

A disordered region spans residues 1–20; that stretch reads MEIPPGLETTKRKVAHSDEH. Positions 1 to 244 are 6-phosphofructo-2-kinase; sequence MEIPPGLETT…VYFLMNIHLL (244 aa). The span at 9–20 shows a compositional bias: basic and acidic residues; the sequence is TTKRKVAHSDEH. 36 to 44 is a binding site for ATP; the sequence is GLPARGKTY. Beta-D-fructose 6-phosphate-binding residues include Arg-69 and Arg-98. Residue Asp-124 is part of the active site. Beta-D-fructose 6-phosphate contacts are provided by Thr-126 and Arg-132. The active site involves Cys-154. 163–168 contacts ATP; the sequence is NVTDVK. Residues Lys-168, Arg-190, and Tyr-194 each contribute to the beta-D-fructose 6-phosphate site. A fructose-2,6-bisphosphatase region spans residues 245-457; it reads PRSIYLTRHG…QLPLCDSPRD (213 aa). Residue Arg-252 coordinates beta-D-fructose 2,6-bisphosphate. The Tele-phosphohistidine intermediate role is filled by His-253. Residues Asn-259 and Gly-265 each contribute to the beta-D-fructose 2,6-bisphosphate site. Residue Glu-324 is the Proton donor/acceptor of the active site. 6 residues coordinate beta-D-fructose 2,6-bisphosphate: Tyr-335, Arg-349, Lys-353, Tyr-364, Gln-390, and Arg-394. 346–349 is a binding site for ATP; that stretch reads ADDR. ATP contacts are provided by residues 390–394 and Tyr-426; that span reads QAVLR.

In the C-terminal section; belongs to the phosphoglycerate mutase family.

It carries out the reaction beta-D-fructose 2,6-bisphosphate + H2O = beta-D-fructose 6-phosphate + phosphate. The catalysed reaction is beta-D-fructose 6-phosphate + ATP = beta-D-fructose 2,6-bisphosphate + ADP + H(+). Synthesis and degradation of fructose 2,6-bisphosphate. The sequence is that of 6-phosphofructo-2-kinase/fructose-2,6-bisphosphatase from Caenorhabditis elegans.